Here is a 399-residue protein sequence, read N- to C-terminus: Large envelope protein (399 aa).

Methionine 1 bears the N-acetylmethionine mark. Glycine 2 is lipidated: N-myristoyl glycine; by host. The pre-S1 stretch occupies residues 2 to 118 (GLSWTVPLEW…PPLRDTHPQA (117 aa)). The segment at 2–173 (GLSWTVPLEW…FSRIGDPAPN (172 aa)) is pre-S. Topologically, residues 2–180 (GLSWTVPLEW…APNMESITSG (179 aa)) are virion surface; in external conformation. Over 2–252 (GLSWTVPLEW…PGYRWMCLRR (251 aa)) the chain is Intravirion; in internal conformation. An N-linked (GlcNAc...) asparagine glycan is attached at serine 4. Positions 85–110 (KTLPADPPPASTNRQSGRQPTPITPP) are disordered. Residues 95-105 (STNRQSGRQPT) show a composition bias toward polar residues. The interval 119–173 (MQWNSTTFHQALQDPRVRGLYFPAGGSSSGTVNPVPTTASLISSIFSRIGDPAPN) is pre-S2. The helical transmembrane segment at 181-201 (FLGPLLVLQAGFFLLTKILTI) threads the bilayer. The Intravirion; in external conformation segment spans residues 202-252 (PQSLDSWWTSLNFLGGAPVCLGQNSQSPTSNHSPTSCPPICPGYRWMCLRR). The helical transmembrane segment at 253 to 273 (FIIFLFILLLCLIFLLVLLDY) threads the bilayer. Topologically, residues 274-347 (QGMLPVCPLI…WASARFSWLS (74 aa)) are virion surface. An N-linked (GlcNAc...) asparagine; by host glycan is attached at asparagine 319. Residues 348 to 368 (LLVPFVQWFAGLSPTVWLSVI) form a helical membrane-spanning segment. Topologically, residues 369 to 374 (WMMWYW) are intravirion. The chain crosses the membrane as a helical span at residues 375–397 (GPSLYDILSPFIPLLPIFFCLWV). The Virion surface portion of the chain corresponds to 398-399 (YI).

Belongs to the orthohepadnavirus major surface antigen family. In its internal form (Li-HBsAg), interacts with the capsid protein and with the isoform S. Interacts with host chaperone CANX. As to quaternary structure, associates with host chaperone CANX through its pre-S2 N glycan; this association may be essential for isoform M proper secretion. In terms of assembly, interacts with isoform L. Interacts with the antigens of satellite virus HDV (HDVAgs); this interaction is required for encapsidation of HDV genomic RNA. Isoform M is N-terminally acetylated by host at a ratio of 90%, and N-glycosylated by host at the pre-S2 region. Post-translationally, myristoylated.

It is found in the virion membrane. Functionally, the large envelope protein exists in two topological conformations, one which is termed 'external' or Le-HBsAg and the other 'internal' or Li-HBsAg. In its external conformation the protein attaches the virus to cell receptors and thereby initiating infection. This interaction determines the species specificity and liver tropism. This attachment induces virion internalization predominantly through caveolin-mediated endocytosis. The large envelope protein also assures fusion between virion membrane and endosomal membrane. In its internal conformation the protein plays a role in virion morphogenesis and mediates the contact with the nucleocapsid like a matrix protein. The middle envelope protein plays an important role in the budding of the virion. It is involved in the induction of budding in a nucleocapsid independent way. In this process the majority of envelope proteins bud to form subviral lipoprotein particles of 22 nm of diameter that do not contain a nucleocapsid. The protein is Large envelope protein of Homo sapiens (Human).